The following is a 525-amino-acid chain: Vesicular inhibitory amino acid transporter (525 aa).

Topologically, residues 1–132 are cytoplasmic; the sequence is MATLLRSKLS…WNVTNAIQGM (132 aa). The interval 69 to 111 is disordered; sequence PCGDEGAEPPVEGDIHYQRGSGAPLPPSGSKDQVGAGGEFGGH. The helical transmembrane segment at 133-153 threads the bilayer; sequence FVLGLPYAILHGGYLGLFLII. The Lumenal, vesicle segment spans residues 154 to 204; the sequence is FAAVVCCYTGKILIACLYEENEDGEVVRVRDSYVAIANACCAPRFPTLGGR. Position 186 is a 3'-nitrotyrosine (tyrosine 186). The helical transmembrane segment at 205–225 threads the bilayer; that stretch reads VVNVAQIIELVMTCILYVVVS. Residues 226–265 lie on the Cytoplasmic side of the membrane; the sequence is GNLMYNSFPGLPVSQKSWSIIATAVLLPCAFLKNLKAVSK. Residues 266 to 286 form a helical membrane-spanning segment; the sequence is FSLLCTLAHFVINILVIAYCL. The Lumenal, vesicle segment spans residues 287 to 305; it reads SRARDWAWEKVKFYIDVKK. The chain crosses the membrane as a helical span at residues 306-326; that stretch reads FPISIGIIVFSYTSQIFLPSL. The Cytoplasmic portion of the chain corresponds to 327 to 341; the sequence is EGNMQQPSEFHCMMN. The chain crosses the membrane as a helical span at residues 342–362; the sequence is WTHIAACVLKGLFALVAYLTW. Residues 363–383 lie on the Lumenal, vesicle side of the membrane; sequence ADETKEVITDNLPGSIRAVVN. A helical membrane pass occupies residues 384 to 404; it reads IFLVAKALLSYPLPFFAAVEV. Residues 405–438 are Cytoplasmic-facing; the sequence is LEKSLFQEGSRAFFPACYGGDGRLKSWGLTLRCA. The helical transmembrane segment at 439–459 threads the bilayer; the sequence is LVVFTLLMAIYVPHFALLMGL. Residues 460 to 461 lie on the Lumenal, vesicle side of the membrane; the sequence is TG. Residues 462–482 traverse the membrane as a helical segment; that stretch reads SLTGAGLCFLLPSLFHLRLLW. Residues 483-489 lie on the Cytoplasmic side of the membrane; it reads RKLLWHQ. Residues 490–510 traverse the membrane as a helical segment; sequence VFFDVAIFVIGGICSVSGFVH. The Lumenal, vesicle portion of the chain corresponds to 511 to 525; the sequence is SLEGLIEAYRTNAED.

This sequence belongs to the amino acid/polyamine transporter 2 family.

It is found in the cytoplasmic vesicle membrane. It localises to the presynapse. The enzyme catalyses 4-aminobutanoate(out) + n H(+)(in) = 4-aminobutanoate(in) + n H(+)(out). It catalyses the reaction glycine(out) + n H(+)(in) = glycine(in) + n H(+)(out). It carries out the reaction beta-alanine(out) + n H(+)(in) = beta-alanine(in) + n H(+)(out). Antiporter that exchanges vesicular protons for cytosolic 4-aminobutanoate or to a lesser extend glycine, thus allowing their secretion from nerve terminals. The transport is equally dependent on the chemical and electrical components of the proton gradient. May also transport beta-alanine. Acidification of GABAergic synaptic vesicles is a prerequisite for 4-aminobutanoate uptake. The polypeptide is Vesicular inhibitory amino acid transporter (Macaca fascicularis (Crab-eating macaque)).